A 549-amino-acid polypeptide reads, in one-letter code: Glucose-6-phosphate isomerase (549 aa).

3 positions are modified to N6-acetyllysine: Lys80, Lys228, and Lys234. The Proton donor role is filled by Glu355. Catalysis depends on residues His386 and Lys514.

Belongs to the GPI family.

Its subcellular location is the cytoplasm. The enzyme catalyses alpha-D-glucose 6-phosphate = beta-D-fructose 6-phosphate. It participates in carbohydrate biosynthesis; gluconeogenesis. Its pathway is carbohydrate degradation; glycolysis; D-glyceraldehyde 3-phosphate and glycerone phosphate from D-glucose: step 2/4. Functionally, catalyzes the reversible isomerization of glucose-6-phosphate to fructose-6-phosphate. In Escherichia coli O17:K52:H18 (strain UMN026 / ExPEC), this protein is Glucose-6-phosphate isomerase.